Consider the following 466-residue polypeptide: Glucose-6-phosphate 1-dehydrogenase 1 (466 aa).

NADP(+)-binding positions include Ser48, 88 to 89 (DV), and Lys141. Positions 171, 175, 209, and 228 each coordinate substrate. His233 acts as the Proton acceptor in catalysis. Residues Lys319 and Lys324 each coordinate substrate.

This sequence belongs to the glucose-6-phosphate dehydrogenase family.

It carries out the reaction D-glucose 6-phosphate + NADP(+) = 6-phospho-D-glucono-1,5-lactone + NADPH + H(+). It participates in carbohydrate degradation; pentose phosphate pathway; D-ribulose 5-phosphate from D-glucose 6-phosphate (oxidative stage): step 1/3. In terms of biological role, catalyzes the oxidation of glucose 6-phosphate to 6-phosphogluconolactone. In Mycobacterium tuberculosis (strain ATCC 25618 / H37Rv), this protein is Glucose-6-phosphate 1-dehydrogenase 1.